Consider the following 64-residue polypeptide: MAKSKGARIIVTLECTECRTNPDKRSPGVSRYTSTKNRRNTTNRLELKKFCTHCNKHTVHKEIK.

It belongs to the bacterial ribosomal protein bL33 family.

This Nostoc sp. (strain PCC 7120 / SAG 25.82 / UTEX 2576) protein is Large ribosomal subunit protein bL33.